The sequence spans 310 residues: Zinc finger CCCH domain-containing protein 14 (310 aa).

The tract at residues 56–75 is disordered; the sequence is ESLSPSPPSSSSPPSRVDTT. A coiled-coil region spans residues 84–129; the sequence is KLILEYDELNEHYELCLNRLQSLMTELDSLRHENDSLRFENSDLLK. Over residues 155-167 the composition is skewed to basic and acidic residues; the sequence is QISDSRSAKRNNQ. The disordered stretch occupies residues 155 to 174; it reads QISDSRSAKRNNQERNSLPK. 2 consecutive C3H1-type zinc fingers follow at residues 232-260 and 270-298; these read MMKTELCNKWQETGACCYGDNCQFAHGID and RYKTEVCRMMVTGAMCPYGHRCHFRHSLT.

In terms of tissue distribution, highly expressed in secondary cell wall-forming tissues and the xylem cells of roots. Expressed predominantly in inflorescence stems, flowers and siliques. Highly expressed in the basal portion of stems, where cells are undergoing secondary cell wall thickening.

Functionally, functions probably as a transcriptional factor that activates genes involved in secondary cell wall biosynthesis. May play a role in both transcriptional and post-transcriptional regulation. Binds to ssDNA, dsDNA, and ribohomopolymers in vitro. Maybe involved in post-transcriptional regulation of its target genes. Targets RNA of a polygalacturonase, a well-known cell wall modifying gene. Functions redudantly with C3H15 to regulate secondary cell wall formation. C3H14 and C3H15 have overlapping roles in the regulation of secondary cell wall formation and anther development. C3H14 may contribute more to secondary cell wall thickening while C3H15 could be more important in anther development. May regulate at both the transcriptional and post-transcriptional levels the expression of many genes involved in various biological processes, particularly those associated with cell wall metabolism and pollen development. The chain is Zinc finger CCCH domain-containing protein 14 from Arabidopsis thaliana (Mouse-ear cress).